Consider the following 212-residue polypeptide: Adenylate kinase (212 aa).

Position 10-15 (10-15 (GAGKGT)) interacts with ATP. Positions 30 to 59 (AIGDIFRTIIKTSTSEAELINNYVKQGELI) are NMP. AMP is bound by residues Arg-36, 57 to 59 (ELI), 85 to 88 (GYPR), and Gln-92. The segment at 122–160 (GRYSCKNCGKIYNRYFLQPKTDNVCDVCGSSTFDYRKDD) is LID. Arg-123 provides a ligand contact to ATP. 2 residues coordinate Zn(2+): Cys-126 and Cys-129. 132 to 133 (IY) contacts ATP. Residues Cys-146 and Cys-149 each coordinate Zn(2+). Residues Arg-157 and Arg-168 each coordinate AMP. Lys-196 lines the ATP pocket.

It belongs to the adenylate kinase family. Monomer.

It is found in the cytoplasm. It carries out the reaction AMP + ATP = 2 ADP. The protein operates within purine metabolism; AMP biosynthesis via salvage pathway; AMP from ADP: step 1/1. In terms of biological role, catalyzes the reversible transfer of the terminal phosphate group between ATP and AMP. Plays an important role in cellular energy homeostasis and in adenine nucleotide metabolism. This chain is Adenylate kinase, found in Rickettsia africae (strain ESF-5).